Consider the following 155-residue polypeptide: SsrA-binding protein (155 aa).

The protein belongs to the SmpB family.

The protein localises to the cytoplasm. In terms of biological role, required for rescue of stalled ribosomes mediated by trans-translation. Binds to transfer-messenger RNA (tmRNA), required for stable association of tmRNA with ribosomes. tmRNA and SmpB together mimic tRNA shape, replacing the anticodon stem-loop with SmpB. tmRNA is encoded by the ssrA gene; the 2 termini fold to resemble tRNA(Ala) and it encodes a 'tag peptide', a short internal open reading frame. During trans-translation Ala-aminoacylated tmRNA acts like a tRNA, entering the A-site of stalled ribosomes, displacing the stalled mRNA. The ribosome then switches to translate the ORF on the tmRNA; the nascent peptide is terminated with the 'tag peptide' encoded by the tmRNA and targeted for degradation. The ribosome is freed to recommence translation, which seems to be the essential function of trans-translation. The sequence is that of SsrA-binding protein from Streptococcus equi subsp. zooepidemicus (strain MGCS10565).